We begin with the raw amino-acid sequence, 68 residues long: UPF0434 protein BURPS668_0926 (68 aa).

Belongs to the UPF0434 family.

This chain is UPF0434 protein BURPS668_0926, found in Burkholderia pseudomallei (strain 668).